The sequence spans 407 residues: Argininosuccinate synthase (407 aa).

ATP contacts are provided by residues 10–18 (AYSGGLDTS) and A37. Y88 and S93 together coordinate L-citrulline. G118 is an ATP binding site. T120, N124, and D125 together coordinate L-aspartate. Residue N124 participates in L-citrulline binding. Residues R128, S180, S189, E265, and Y277 each contribute to the L-citrulline site.

It belongs to the argininosuccinate synthase family. Type 1 subfamily. Homotetramer.

The protein resides in the cytoplasm. It carries out the reaction L-citrulline + L-aspartate + ATP = 2-(N(omega)-L-arginino)succinate + AMP + diphosphate + H(+). Its pathway is amino-acid biosynthesis; L-arginine biosynthesis; L-arginine from L-ornithine and carbamoyl phosphate: step 2/3. The sequence is that of Argininosuccinate synthase from Alcanivorax borkumensis (strain ATCC 700651 / DSM 11573 / NCIMB 13689 / SK2).